A 222-amino-acid chain; its full sequence is Ubiquitin-conjugating enzyme E2 S (222 aa).

Met-1 carries the N-acetylmethionine modification. The UBC core domain maps to 11 to 157; it reads HIIRLVYKEV…ARLLTEIHGG (147 aa). The active-site Glycyl thioester intermediate is the Cys-95. The tract at residues 156 to 222 is disordered; the sequence is GGAGGPSGRA…TDKKRALRRL (67 aa). Ser-173 carries the phosphoserine modification. The span at 208 to 222 shows a compositional bias: basic residues; it reads AAKKKTDKKRALRRL.

It belongs to the ubiquitin-conjugating enzyme family. Component of the APC/C complex, composed of at least 14 distinct subunits that assemble into a complex of at least 19 chains with a combined molecular mass of around 1.2 MDa. Within this complex, directly interacts with ANAPC2 and ANAPC4. Interacts with CDC20, FZR1/CDH1 and VHL. Post-translationally, autoubiquitinated by the APC/C complex during G1, leading to its degradation by the proteasome.

The catalysed reaction is S-ubiquitinyl-[E1 ubiquitin-activating enzyme]-L-cysteine + [E2 ubiquitin-conjugating enzyme]-L-cysteine = [E1 ubiquitin-activating enzyme]-L-cysteine + S-ubiquitinyl-[E2 ubiquitin-conjugating enzyme]-L-cysteine.. It participates in protein modification; protein ubiquitination. Functionally, accepts ubiquitin from the E1 complex and catalyzes its covalent attachment to other proteins. Catalyzes 'Lys-11'-linked polyubiquitination. Acts as an essential factor of the anaphase promoting complex/cyclosome (APC/C), a cell cycle-regulated ubiquitin ligase that controls progression through mitosis. Acts by specifically elongating 'Lys-11'-linked polyubiquitin chains initiated by the E2 enzyme UBE2C/UBCH10 on APC/C substrates, enhancing the degradation of APC/C substrates by the proteasome and promoting mitotic exit. Also acts by elongating ubiquitin chains initiated by the E2 enzyme UBE2D1/UBCH5 in vitro; it is however unclear whether UBE2D1/UBCH5 acts as an E2 enzyme for the APC/C in vivo. Also involved in ubiquitination and subsequent degradation of VHL, resulting in an accumulation of HIF1A. In vitro able to promote polyubiquitination using all 7 ubiquitin Lys residues, except 'Lys-48'-linked polyubiquitination. This is Ubiquitin-conjugating enzyme E2 S (UBE2S) from Homo sapiens (Human).